A 318-amino-acid polypeptide reads, in one-letter code: 4-hydroxy-3-methylbut-2-enyl diphosphate reductase (318 aa).

Residue C12 coordinates [4Fe-4S] cluster. (2E)-4-hydroxy-3-methylbut-2-enyl diphosphate contacts are provided by H41 and H74. Residues H41 and H74 each coordinate dimethylallyl diphosphate. Residues H41 and H74 each contribute to the isopentenyl diphosphate site. C96 is a binding site for [4Fe-4S] cluster. H124 is a binding site for (2E)-4-hydroxy-3-methylbut-2-enyl diphosphate. H124 lines the dimethylallyl diphosphate pocket. H124 contacts isopentenyl diphosphate. E126 acts as the Proton donor in catalysis. T167 provides a ligand contact to (2E)-4-hydroxy-3-methylbut-2-enyl diphosphate. A [4Fe-4S] cluster-binding site is contributed by C197. S225, S226, N227, and S269 together coordinate (2E)-4-hydroxy-3-methylbut-2-enyl diphosphate. Residues S225, S226, N227, and S269 each coordinate dimethylallyl diphosphate. Positions 225, 226, 227, and 269 each coordinate isopentenyl diphosphate.

It belongs to the IspH family. It depends on [4Fe-4S] cluster as a cofactor.

The enzyme catalyses isopentenyl diphosphate + 2 oxidized [2Fe-2S]-[ferredoxin] + H2O = (2E)-4-hydroxy-3-methylbut-2-enyl diphosphate + 2 reduced [2Fe-2S]-[ferredoxin] + 2 H(+). It catalyses the reaction dimethylallyl diphosphate + 2 oxidized [2Fe-2S]-[ferredoxin] + H2O = (2E)-4-hydroxy-3-methylbut-2-enyl diphosphate + 2 reduced [2Fe-2S]-[ferredoxin] + 2 H(+). It participates in isoprenoid biosynthesis; dimethylallyl diphosphate biosynthesis; dimethylallyl diphosphate from (2E)-4-hydroxy-3-methylbutenyl diphosphate: step 1/1. The protein operates within isoprenoid biosynthesis; isopentenyl diphosphate biosynthesis via DXP pathway; isopentenyl diphosphate from 1-deoxy-D-xylulose 5-phosphate: step 6/6. In terms of biological role, catalyzes the conversion of 1-hydroxy-2-methyl-2-(E)-butenyl 4-diphosphate (HMBPP) into a mixture of isopentenyl diphosphate (IPP) and dimethylallyl diphosphate (DMAPP). Acts in the terminal step of the DOXP/MEP pathway for isoprenoid precursor biosynthesis. The sequence is that of 4-hydroxy-3-methylbut-2-enyl diphosphate reductase from Francisella tularensis subsp. mediasiatica (strain FSC147).